A 570-amino-acid polypeptide reads, in one-letter code: MITGNEFYTVMCAMAPLYFAMFVAYGSVKWCKIFTPAQCSGINRFVSVFAVPVLSFHFISQNNPYKMDTMFILADTLSKIFVFVLLSLWAVFFKAGGLDWLITLFSIATLPNTLVMGIPLLQAMYGDYTQTLMVQLVVLQCIIWYTLLLFLFELRAARLLIRAEFPGQAAGSIAKIQVDDDVISLDGMDPLRTETETDVNGRIRLRIRRSVSSVPDSVMSSSLCLTPRASNLSNAEIFSVNTPNNRFFHGGGGSGTLQFYNGSNEIMFCNGDLGGFGFTRPGLGASPRRLSGYASSDAYSLQPTPRASNFNELDVNGNGTPVWMKSPAAGRIYRQSSPKMMWESGQRHAAKDINGSVPEKEISFRDALKAAPQATAAGGGASMEEGAAGKDTTPVAAIGKQEMPSAIVMMRLILTVVGRKLSRNPNTYSSLLGLVWSLISFKWNIPMPNIVDFSIKIISDAGLGMAMFSLGLFMALQPKMIPCGAKKATMGMLIRFISGPLFMAGASLLVGLRGSRLHAAIVQAALPQGIVPFVFAREYNLHPDLLSTLVIFGMIVSLPVTILYYVLLGL.

Residues 1–6 (MITGNE) are Extracellular-facing. The chain crosses the membrane as a helical span at residues 7–27 (FYTVMCAMAPLYFAMFVAYGS). At 28 to 38 (VKWCKIFTPAQ) the chain is on the cytoplasmic side. The chain crosses the membrane as a helical span at residues 39–59 (CSGINRFVSVFAVPVLSFHFI). Residue valine 51 participates in (indol-3-yl)acetate binding. Topologically, residues 60 to 70 (SQNNPYKMDTM) are extracellular. A helical transmembrane segment spans residues 71–91 (FILADTLSKIFVFVLLSLWAV). Over 92-100 (FFKAGGLDW) the chain is Cytoplasmic. A helical transmembrane segment spans residues 101 to 121 (LITLFSIATLPNTLVMGIPLL). Residues asparagine 112 and leucine 114 each coordinate (indol-3-yl)acetate. The Extracellular segment spans residues 122–131 (QAMYGDYTQT). A helical transmembrane segment spans residues 132–152 (LMVQLVVLQCIIWYTLLLFLF). Position 145 (tyrosine 145) interacts with (indol-3-yl)acetate. Residues 153 to 430 (ELRAARLLIR…LSRNPNTYSS (278 aa)) lie on the Cytoplasmic side of the membrane. Phosphoserine is present on residues serine 230 and serine 308. A helical membrane pass occupies residues 431–451 (LLGLVWSLISFKWNIPMPNIV). At 452–454 (DFS) the chain is on the extracellular side. A helical transmembrane segment spans residues 455–475 (IKIISDAGLGMAMFSLGLFMA). Over 476 to 491 (LQPKMIPCGAKKATMG) the chain is Cytoplasmic. The helical transmembrane segment at 492–512 (MLIRFISGPLFMAGASLLVGL) threads the bilayer. Residues 513-515 (RGS) are Extracellular-facing. Residues 516-536 (RLHAAIVQAALPQGIVPFVFA) traverse the membrane as a helical segment. Positions 530 and 531 each coordinate (indol-3-yl)acetate. Residues 537 to 549 (REYNLHPDLLSTL) are Cytoplasmic-facing. The helical transmembrane segment at 550–570 (VIFGMIVSLPVTILYYVLLGL) threads the bilayer.

This sequence belongs to the auxin efflux carrier (TC 2.A.69.1) family. Homodimer. As to expression, expressed in the vasculature of the primary root, cotyledons, floral stem, sepals and the main transmitting tract of the reproductive silique. Expressed in embryos, shoot meristem, root tip and lateral root meristems. Expressed in the nectaries and the floral organ boundaries of the anthers. Detected in pollen. Expressed in broad subepidermal domains that narrowed to sites of vein formation. Expressed in veins of mature leaves.

Its subcellular location is the endoplasmic reticulum membrane. Component of the intracellular auxin-transport pathway. Regulates auxin transport and auxin homeostasis. Directly involved in the regulation of nectar production. Involved in unfolded protein response (UPR) activation. Involved in the control of vein patterning. Redundantly with PIN8, inhibits the vein-formation-promoting functions of PIN5. PIN5, PIN6, and PIN8 control vein network geometry, but they are expressed in mutually exclusive domains of leaf vascular cells. This chain is Auxin efflux carrier component 6, found in Arabidopsis thaliana (Mouse-ear cress).